A 337-amino-acid polypeptide reads, in one-letter code: Pseudouridine-5'-phosphate glycosidase (337 aa).

Catalysis depends on E26, which acts as the Proton donor. Positions 87 and 107 each coordinate substrate. Residue D139 participates in Mn(2+) binding. 141-143 (SAD) provides a ligand contact to substrate. K160 (nucleophile) is an active-site residue. Positions 306–325 (SSGPQAGAGAPGAEPGPARR) are enriched in low complexity. The tract at residues 306–337 (SSGPQAGAGAPGAEPGPARRTSPARAPSGEGW) is disordered.

This sequence belongs to the pseudouridine-5'-phosphate glycosidase family. As to quaternary structure, homotrimer. Mn(2+) is required as a cofactor.

It carries out the reaction D-ribose 5-phosphate + uracil = psi-UMP + H2O. Its function is as follows. Catalyzes the reversible cleavage of pseudouridine 5'-phosphate (PsiMP) to ribose 5-phosphate and uracil. Functions biologically in the cleavage direction, as part of a pseudouridine degradation pathway. This chain is Pseudouridine-5'-phosphate glycosidase, found in Methylobacterium nodulans (strain LMG 21967 / CNCM I-2342 / ORS 2060).